We begin with the raw amino-acid sequence, 510 residues long: MTELLWAVVALLAGLAGGAGIGVYWANNGVSSLVQRKAAEARLLIEEARSQQKEILLQAKDEALRIRNEAEAELRESRQSLQKQEERLQRKEENIDRKLEGIERRERLIQQRERQIEQLTQEAERLKRQQAQELERISQLSREEARSIILAEVERETREDAARRIRELEQQTKEEADKIARKIIGLAIQRCASDYVAEMTVSTVNLPSEELKGRIIGREGRNIRAFEQITGVDIIVDDTPEAVTLSCHDPVRREVARVALLKLLKDGRIHPSRIEEVVHKTQLEIEQIMREEGERVAYEANVQGLHPDLIKLLGRLKYRTSYGQNVLQHSLECALLAAHMAAELGANVNIAKTAALLHDIGKAVDHEVQGPHALIGAEIARRLGRSAAIVHAIAAHHYDEEPQTVEAFLVIAADAISGARPGARRETLDLYIKRLEALETVATSFPGVQRAFAVQAGREVRVMVQPDQIDDLASIHLARNVAKKIEESLQYPGQIKVTIIRETRAVDYAR.

The chain crosses the membrane as a helical span at residues 4–24 (LLWAVVALLAGLAGGAGIGVY). The 61-residue stretch at 200–260 (TVSTVNLPSE…VRREVARVAL (61 aa)) folds into the KH domain. One can recognise an HD domain in the interval 326–419 (VLQHSLECAL…VIAADAISGA (94 aa)).

This sequence belongs to the RNase Y family.

The protein resides in the cell membrane. Endoribonuclease that initiates mRNA decay. This chain is Ribonuclease Y, found in Chloroflexus aurantiacus (strain ATCC 29366 / DSM 635 / J-10-fl).